The chain runs to 86 residues: Omega-theraphotoxin-Hhn1a 2 (86 aa).

A signal peptide spans 1–21; that stretch reads MKSIVFVALLGLALLAVVCSA. Residues 22–50 constitute a propeptide that is removed on maturation; that stretch reads SEDAHKELLKEVVRAMVVDKTDAVQAEER. 3 cysteine pairs are disulfide-bonded: C52–C66, C59–C71, and C65–C78.

The protein belongs to the neurotoxin 10 (Hwtx-1) family. 17 (Hntx-9) subfamily. Expressed by the venom gland.

It is found in the secreted. Functionally, ion channel inhibitor. The protein is Omega-theraphotoxin-Hhn1a 2 of Cyriopagopus hainanus (Chinese bird spider).